Here is a 1058-residue protein sequence, read N- to C-terminus: Bromodomain-containing protein 1 (1058 aa).

Residues 1–12 (MRRKGRCHRGSA) are compositionally biased toward basic residues. The segment at 1–26 (MRRKGRCHRGSAARHPSSPCSVKHSP) is disordered. An interaction with KAT7/HBO1 and histones region spans residues 31 to 80 (LTYAQAQRMVEIEIEGRLHRISIFDPLEIILEDDLTAQEMSECNSNKENS). Residues 92–116 (HKNNRVKKKNEALPSAHGTPASASA) form a disordered region. Position 128 is a phosphoserine (Ser128). A PHD-type 1 zinc finger spans residues 214 to 264 (DAVCCICMDGECQNSNVILFCDMCNLAVHQECYGVPYIPEGQWLCRHCLQS). The segment at 268–301 (PADCVLCPNKGGAFKKTDDDRWGHVVCALWIPEV) adopts a C2HC pre-PHD-type zinc-finger fold. The PHD-type 2 zinc finger occupies 325–389 (LTCYLCKQKG…RKTAYCDVHT (65 aa)). An N6-acetyllysine mark is found at Lys368, Lys516, and Lys519. Glycyl lysine isopeptide (Lys-Gly) (interchain with G-Cter in SUMO2) cross-links involve residues Lys554 and Lys594. Residues 562–666 (LRLTPLTVLL…DQGGVVLRQA (105 aa)) enclose the Bromo domain. 2 disordered regions span residues 755 to 776 (LSQQHSQPLPTGPGLEGFEEDG) and 791 to 868 (LETL…DSSF). Ser803 bears the Phosphoserine mark. Low complexity predominate over residues 852–867 (SESSISSSNSPLCDSS). At Lys903 the chain carries N6-acetyllysine. Phosphoserine is present on Arg906. The PWWP domain occupies 929–1012 (PLKVVWAKCS…KSKMVPLGID (84 aa)). Phosphoserine occurs at positions 1052 and 1055.

As to quaternary structure, component of some HBO1 complex composed of KAT7/HBO1, MEAF6, ING4 and BRD1/BRPF2. Component of the MOZ/MORF complex composed at least of ING5, KAT6A, KAT6B, MEAF6 and one of BRPF1, BRD1/BRPF2 and BRPF3. Interacts (via PHD-type zinc finger domain) with unmodified histone H3. Interacts (via PWWP domain) with dimethylated and trimethylated 'Lys-79' on histone H3. Highly expressed in testis.

The protein localises to the nucleus. Its subcellular location is the chromosome. Its function is as follows. Scaffold subunit of various histone acetyltransferase (HAT) complexes, such as the MOZ/MORF and HBO1 complexes, that acts as a regulator of hematopoiesis. Plays a key role in HBO1 complex by directing KAT7/HBO1 specificity towards histone H3 'Lys-14' acetylation (H3K14ac), thereby promoting erythroid differentiation. The chain is Bromodomain-containing protein 1 from Homo sapiens (Human).